The sequence spans 171 residues: S-ribosylhomocysteine lyase (171 aa).

Fe cation contacts are provided by histidine 54, histidine 58, and cysteine 128.

Belongs to the LuxS family. In terms of assembly, homodimer. Requires Fe cation as cofactor.

It carries out the reaction S-(5-deoxy-D-ribos-5-yl)-L-homocysteine = (S)-4,5-dihydroxypentane-2,3-dione + L-homocysteine. Functionally, involved in the synthesis of autoinducer 2 (AI-2) which is secreted by bacteria and is used to communicate both the cell density and the metabolic potential of the environment. The regulation of gene expression in response to changes in cell density is called quorum sensing. Catalyzes the transformation of S-ribosylhomocysteine (RHC) to homocysteine (HC) and 4,5-dihydroxy-2,3-pentadione (DPD). This is S-ribosylhomocysteine lyase from Shigella flexneri.